A 156-amino-acid chain; its full sequence is Cell division protein SepF (156 aa).

The tract at residues N30–K49 is disordered.

Belongs to the SepF family. In terms of assembly, homodimer. Interacts with FtsZ.

The protein localises to the cytoplasm. Cell division protein that is part of the divisome complex and is recruited early to the Z-ring. Probably stimulates Z-ring formation, perhaps through the cross-linking of FtsZ protofilaments. Its function overlaps with FtsA. The polypeptide is Cell division protein SepF (Exiguobacterium sp. (strain ATCC BAA-1283 / AT1b)).